The following is a 322-amino-acid chain: Probable manganese-dependent inorganic pyrophosphatase (322 aa).

Residues His-10, Asp-14, Asp-16, Asp-86, His-108, and Asp-160 each contribute to the Mn(2+) site.

The protein belongs to the PPase class C family. The cofactor is Mn(2+).

The protein resides in the cytoplasm. It carries out the reaction diphosphate + H2O = 2 phosphate + H(+). The chain is Probable manganese-dependent inorganic pyrophosphatase (ppaC) from Archaeoglobus fulgidus (strain ATCC 49558 / DSM 4304 / JCM 9628 / NBRC 100126 / VC-16).